Consider the following 336-residue polypeptide: Fructose-1,6-bisphosphatase class 1 (336 aa).

Mg(2+) is bound by residues E92, D115, L117, and D118. Substrate-binding positions include 118 to 121, N211, Y244, 262 to 264, and K274; these read DGSS and YLY. Mg(2+) is bound at residue E280.

The protein belongs to the FBPase class 1 family. As to quaternary structure, homotetramer. It depends on Mg(2+) as a cofactor.

It localises to the cytoplasm. The catalysed reaction is beta-D-fructose 1,6-bisphosphate + H2O = beta-D-fructose 6-phosphate + phosphate. Its pathway is carbohydrate biosynthesis; gluconeogenesis. This Vibrio cholerae serotype O1 (strain ATCC 39541 / Classical Ogawa 395 / O395) protein is Fructose-1,6-bisphosphatase class 1.